A 309-amino-acid polypeptide reads, in one-letter code: uncharacterized protein (309 aa).

This sequence belongs to the anthranilate phosphoribosyltransferase family.

This is an uncharacterized protein from Aquifex aeolicus (strain VF5).